The primary structure comprises 212 residues: Thiamine-phosphate synthase (212 aa).

Residues 39–43 (QLRIK) and N71 contribute to the 4-amino-2-methyl-5-(diphosphooxymethyl)pyrimidine site. Residues D72 and D91 each contribute to the Mg(2+) site. S110 provides a ligand contact to 4-amino-2-methyl-5-(diphosphooxymethyl)pyrimidine. 2-[(2R,5Z)-2-carboxy-4-methylthiazol-5(2H)-ylidene]ethyl phosphate is bound at residue 136–138 (TQT). K139 serves as a coordination point for 4-amino-2-methyl-5-(diphosphooxymethyl)pyrimidine. 2-[(2R,5Z)-2-carboxy-4-methylthiazol-5(2H)-ylidene]ethyl phosphate is bound by residues G168 and 188 to 189 (VS).

It belongs to the thiamine-phosphate synthase family. It depends on Mg(2+) as a cofactor.

It catalyses the reaction 2-[(2R,5Z)-2-carboxy-4-methylthiazol-5(2H)-ylidene]ethyl phosphate + 4-amino-2-methyl-5-(diphosphooxymethyl)pyrimidine + 2 H(+) = thiamine phosphate + CO2 + diphosphate. The enzyme catalyses 2-(2-carboxy-4-methylthiazol-5-yl)ethyl phosphate + 4-amino-2-methyl-5-(diphosphooxymethyl)pyrimidine + 2 H(+) = thiamine phosphate + CO2 + diphosphate. The catalysed reaction is 4-methyl-5-(2-phosphooxyethyl)-thiazole + 4-amino-2-methyl-5-(diphosphooxymethyl)pyrimidine + H(+) = thiamine phosphate + diphosphate. It participates in cofactor biosynthesis; thiamine diphosphate biosynthesis; thiamine phosphate from 4-amino-2-methyl-5-diphosphomethylpyrimidine and 4-methyl-5-(2-phosphoethyl)-thiazole: step 1/1. In terms of biological role, condenses 4-methyl-5-(beta-hydroxyethyl)thiazole monophosphate (THZ-P) and 2-methyl-4-amino-5-hydroxymethyl pyrimidine pyrophosphate (HMP-PP) to form thiamine monophosphate (TMP). This is Thiamine-phosphate synthase from Serratia proteamaculans (strain 568).